An 87-amino-acid polypeptide reads, in one-letter code: Neutrophil antibiotic peptide NP-3B (87 aa).

The signal sequence occupies residues 1-19 (MRTLILLTTLLLLALHTQA). A propeptide spanning residues 20–58 (ESPQGSTKEAPDEEQDISVFFGGDKGTALQDAAVKAGVT) is cleaved from the precursor. Disulfide bonds link C59-C87, C61-C76, and C66-C86.

Belongs to the alpha-defensin family.

It is found in the secreted. Functionally, active in vitro against S.aureus, fungi, Gram-positive and Gram-negative bacteria and to a lesser extent against an enveloped virus. This is Neutrophil antibiotic peptide NP-3B from Rattus norvegicus (Rat).